The primary structure comprises 146 residues: Deoxyuridine 5'-triphosphate nucleotidohydrolase (146 aa).

Substrate-binding positions include 66 to 68 (RSG), asparagine 79, and 83 to 85 (TID).

This sequence belongs to the dUTPase family. Requires Mg(2+) as cofactor.

It carries out the reaction dUTP + H2O = dUMP + diphosphate + H(+). Its pathway is pyrimidine metabolism; dUMP biosynthesis; dUMP from dCTP (dUTP route): step 2/2. This enzyme is involved in nucleotide metabolism: it produces dUMP, the immediate precursor of thymidine nucleotides and it decreases the intracellular concentration of dUTP so that uracil cannot be incorporated into DNA. This chain is Deoxyuridine 5'-triphosphate nucleotidohydrolase, found in Citrifermentans bemidjiense (strain ATCC BAA-1014 / DSM 16622 / JCM 12645 / Bem) (Geobacter bemidjiensis).